Here is a 513-residue protein sequence, read N- to C-terminus: Putative ribose/galactose/methyl galactoside import ATP-binding protein 2 (513 aa).

ABC transporter domains are found at residues 24–260 (LSAE…VGRE) and 270–510 (VPIG…VMEL). ATP is bound at residue 56-63 (GENGAGKS).

It belongs to the ABC transporter superfamily. Carbohydrate importer 2 (CUT2) (TC 3.A.1.2) family.

It is found in the cell inner membrane. It catalyses the reaction D-ribose(out) + ATP + H2O = D-ribose(in) + ADP + phosphate + H(+). The enzyme catalyses D-galactose(out) + ATP + H2O = D-galactose(in) + ADP + phosphate + H(+). Part of an ABC transporter complex involved in carbohydrate import. Could be involved in ribose, galactose and/or methyl galactoside import. Responsible for energy coupling to the transport system. The chain is Putative ribose/galactose/methyl galactoside import ATP-binding protein 2 from Rhizobium etli (strain ATCC 51251 / DSM 11541 / JCM 21823 / NBRC 15573 / CFN 42).